Consider the following 466-residue polypeptide: Histidine--tRNA ligase (466 aa).

This sequence belongs to the class-II aminoacyl-tRNA synthetase family. As to quaternary structure, homodimer.

It localises to the cytoplasm. The enzyme catalyses tRNA(His) + L-histidine + ATP = L-histidyl-tRNA(His) + AMP + diphosphate + H(+). This Bifidobacterium animalis subsp. lactis (strain AD011) protein is Histidine--tRNA ligase.